The primary structure comprises 201 residues: Holliday junction branch migration complex subunit RuvA (201 aa).

The segment at 1–64 is domain I; the sequence is MYAYIRGKLT…EDAQLLYGFI (64 aa). The tract at residues 65-143 is domain II; the sequence is NEEEKDMFLS…ITRETTETLL (79 aa). Residues 144-150 are flexible linker; the sequence is SMNEENS. The interval 151 to 201 is domain III; the sequence is NSENLVKEALLALEALGYSKREISKVEKVLNKSTFDSVDEAVKLGLKTLVS.

Belongs to the RuvA family. Homotetramer. Forms an RuvA(8)-RuvB(12)-Holliday junction (HJ) complex. HJ DNA is sandwiched between 2 RuvA tetramers; dsDNA enters through RuvA and exits via RuvB. An RuvB hexamer assembles on each DNA strand where it exits the tetramer. Each RuvB hexamer is contacted by two RuvA subunits (via domain III) on 2 adjacent RuvB subunits; this complex drives branch migration. In the full resolvosome a probable DNA-RuvA(4)-RuvB(12)-RuvC(2) complex forms which resolves the HJ.

It is found in the cytoplasm. In terms of biological role, the RuvA-RuvB-RuvC complex processes Holliday junction (HJ) DNA during genetic recombination and DNA repair, while the RuvA-RuvB complex plays an important role in the rescue of blocked DNA replication forks via replication fork reversal (RFR). RuvA specifically binds to HJ cruciform DNA, conferring on it an open structure. The RuvB hexamer acts as an ATP-dependent pump, pulling dsDNA into and through the RuvAB complex. HJ branch migration allows RuvC to scan DNA until it finds its consensus sequence, where it cleaves and resolves the cruciform DNA. The protein is Holliday junction branch migration complex subunit RuvA of Staphylococcus haemolyticus (strain JCSC1435).